An 871-amino-acid polypeptide reads, in one-letter code: Translation initiation factor IF-2 (871 aa).

Disordered stretches follow at residues 60-101 (KKNI…QEVK) and 184-203 (ESLKKKKKEKKSFVASKKES). Residues 61–72 (KNIKTPTAKKPK) are compositionally biased toward basic residues. The segment covering 73-101 (KENIKEQEKLNESEKKEPKKEEKLKQEVK) has biased composition (basic and acidic residues). In terms of domain architecture, tr-type G spans 370 to 537 (TRAPVITIMG…IVLLQADILE (168 aa)). A G1 region spans residues 379 to 386 (GHVDHGKT). 379 to 386 (GHVDHGKT) provides a ligand contact to GTP. A G2 region spans residues 404–408 (GITQH). The tract at residues 425 to 428 (DTPG) is G3. GTP is bound by residues 425-429 (DTPGH) and 479-482 (NKMD). The tract at residues 479–482 (NKMD) is G4. Residues 515–517 (SAK) form a G5 region.

Belongs to the TRAFAC class translation factor GTPase superfamily. Classic translation factor GTPase family. IF-2 subfamily.

The protein resides in the cytoplasm. One of the essential components for the initiation of protein synthesis. Protects formylmethionyl-tRNA from spontaneous hydrolysis and promotes its binding to the 30S ribosomal subunits. Also involved in the hydrolysis of GTP during the formation of the 70S ribosomal complex. This chain is Translation initiation factor IF-2, found in Campylobacter jejuni subsp. jejuni serotype O:23/36 (strain 81-176).